The chain runs to 512 residues: Krueppel-like factor 11 (512 aa).

The tract at residues 109 to 128 (PQSPDLVEPSTRTPVSPQVT) is disordered. Residues 118–128 (STRTPVSPQVT) show a composition bias toward polar residues. S124 bears the Phosphoserine mark. 3 consecutive C2H2-type zinc fingers follow at residues 394–418 (YVCS…LRTH), 424–448 (FNCS…RRTH), and 454–476 (FVCP…ARRH).

Belongs to the Sp1 C2H2-type zinc-finger protein family. In terms of assembly, interacts with SIN3A. In terms of tissue distribution, ubiquitous. Higher expression in erythroid cells.

The protein localises to the nucleus. Transcription factor. Activates the epsilon- and gamma-globin gene promoters and, to a much lower degree, the beta-globin gene and represses promoters containing SP1-like binding inhibiting cell growth. Represses transcription of SMAD7 which enhances TGF-beta signaling. Induces apoptosis. The chain is Krueppel-like factor 11 (KLF11) from Homo sapiens (Human).